The chain runs to 684 residues: Phenoloxidase 1 (684 aa).

A propeptide spans 1–50 (MSDKNKLLLLFDRPLETVIVPRGPDQEAFDVPVDLLSDRYKAIGVQVSNR) (removed by PPAF1). N80 is a glycosylation site (N-linked (GlcNAc...) asparagine). Cu cation is bound by residues H208, H212, and H237. Catalysis depends on E349, which acts as the Proton acceptor. N-linked (GlcNAc...) asparagine glycosylation is found at N352 and N356. Cu cation contacts are provided by H364, H368, and H404. Residues N486, N491, and N545 are each glycosylated (N-linked (GlcNAc...) asparagine). Disulfide bonds link C579–C621 and C581–C628.

This sequence belongs to the tyrosinase family. In terms of assembly, dimer. Might form a homodimer or a heterodimer with PPO1. Might interact with PPAF2 (via CLIP domain); the interaction might be required for PPO1 activity. It depends on Cu(2+) as a cofactor. Post-translationally, propeptide cleaved by PPAF1. Hemocytes.

It is found in the secreted. In terms of biological role, this is a copper-containing oxidase that functions in the formation of pigments such as melanins and other polyphenolic compounds. Catalyzes the oxidation of o-diphenols (N-acetyldopamine, 4-methylcatechol and dopamine). Cannot oxidize monophenols and p-phenols (L-tyrosine, tyramine, gentisic acid and hydroquinone). Binds to the surface of hemocytes and is involved in hemocyte melanization. Activation of the enzyme in response to bacterial lipopolysaccharides (LPS) suggests it may play a role in innate immunity. The protein is Phenoloxidase 1 of Holotrichia diomphalia (Korean black chafer).